Consider the following 966-residue polypeptide: Mitogen-activated protein kinase kinase kinase 13 (966 aa).

3 disordered regions span residues 1 to 22 (MANF…SESK), 30 to 49 (ELTA…QQEK), and 90 to 114 (HDES…SGTE). The segment covering 95 to 113 (TAVSQGNSNTVDGESTSGT) has biased composition (polar residues). Residues 168-409 (ISELQWLGSG…FRQTLMHLDI (242 aa)) enclose the Protein kinase domain. ATP is bound by residues 174–182 (LGSGAQGAV) and Lys195. The active-site Proton acceptor is the Asp279. Leucine-zipper regions lie at residues 433–454 (VKKH…DEEL) and 486–507 (LSAI…EQAV). 4 disordered regions span residues 534 to 599 (KRKG…RGSH), 611 to 655 (AQEN…HHPR), 744 to 834 (DIPS…RRQR), and 846 to 908 (STFS…GLSD). A compositionally biased stretch (low complexity) spans 567–581 (SPLSGSPKMSTSSSK). Residues 582-594 (SRYRSKPRHRRGN) show a composition bias toward basic residues. Composition is skewed to polar residues over residues 611–629 (AQEN…SQYP) and 785–795 (RSESSLGTSHL). Residues 814 to 827 (DSSEEEEGEVDSEV) show a composition bias toward acidic residues. An acidic region spans residues 815 to 828 (SSEEEEGEVDSEVE). A compositionally biased stretch (polar residues) spans 846–855 (STFSSENFSV). Positions 873 to 887 (LADKLEDRLAEKLDD) are enriched in basic and acidic residues.

The protein belongs to the protein kinase superfamily. STE Ser/Thr protein kinase family. MAP kinase kinase kinase subfamily. As to quaternary structure, homodimer; forms dimers through the leucine-zipper motif. Interacts with the C-terminus of MAPK8IP1 through the kinase catalytic domain. Binds PRDX3. Associates with the IKK complex through the kinase domain. It depends on Mg(2+) as a cofactor. Autophosphorylated on serine and threonine residues. As to expression, expressed in the adult brain, liver, placenta and pancreas, with expression strongest in the pancreas.

The protein localises to the cytoplasm. Its subcellular location is the membrane. The catalysed reaction is L-seryl-[protein] + ATP = O-phospho-L-seryl-[protein] + ADP + H(+). It catalyses the reaction L-threonyl-[protein] + ATP = O-phospho-L-threonyl-[protein] + ADP + H(+). Activated by autophosphorylation and homodimerization. Functionally, activates the JUN N-terminal pathway through activation of the MAP kinase kinase MAP2K7. Acts synergistically with PRDX3 to regulate the activation of NF-kappa-B in the cytosol. This activation is kinase-dependent and involves activating the IKK complex, the IKBKB-containing complex that phosphorylates inhibitors of NF-kappa-B. This chain is Mitogen-activated protein kinase kinase kinase 13, found in Homo sapiens (Human).